The sequence spans 262 residues: Tritrans,polycis-undecaprenyl-diphosphate synthase (geranylgeranyl-diphosphate specific) (262 aa).

Residue aspartate 40 is part of the active site. Aspartate 40 lines the Mg(2+) pocket. Substrate-binding positions include 41 to 44 (GNRR), tryptophan 45, and 85 to 87 (STE). Asparagine 88 functions as the Proton acceptor in the catalytic mechanism. Substrate contacts are provided by residues arginine 92, arginine 211, and 217–219 (RIS). Position 230 (glutamate 230) interacts with Mg(2+).

It belongs to the UPP synthase family. As to quaternary structure, homodimer. It depends on Mg(2+) as a cofactor.

The enzyme catalyses geranylgeranyl diphosphate + 7 isopentenyl diphosphate = tri-trans,hepta-cis-undecaprenyl diphosphate + 7 diphosphate. In terms of biological role, catalyzes the sequential condensation of isopentenyl diphosphate (IPP) with geranylgeranyl diphosphate (GGPP) to yield (2Z,6Z,10Z,14Z,18Z,22Z,26Z,30E,34E,38E)-undecaprenyl diphosphate (tritrans,heptacis-UPP). It is probably the precursor of glycosyl carrier lipids. This is Tritrans,polycis-undecaprenyl-diphosphate synthase (geranylgeranyl-diphosphate specific) from Sulfurisphaera tokodaii (strain DSM 16993 / JCM 10545 / NBRC 100140 / 7) (Sulfolobus tokodaii).